The primary structure comprises 367 residues: tRNA/tmRNA (uracil-C(5))-methyltransferase (367 aa).

Residues glutamine 189, tyrosine 217, asparagine 222, glutamate 238, and aspartate 298 each coordinate S-adenosyl-L-methionine. Cysteine 323 serves as the catalytic Nucleophile. Glutamate 357 (proton acceptor) is an active-site residue.

It belongs to the class I-like SAM-binding methyltransferase superfamily. RNA M5U methyltransferase family. TrmA subfamily.

It carries out the reaction uridine(54) in tRNA + S-adenosyl-L-methionine = 5-methyluridine(54) in tRNA + S-adenosyl-L-homocysteine + H(+). It catalyses the reaction uridine(341) in tmRNA + S-adenosyl-L-methionine = 5-methyluridine(341) in tmRNA + S-adenosyl-L-homocysteine + H(+). In terms of biological role, dual-specificity methyltransferase that catalyzes the formation of 5-methyluridine at position 54 (m5U54) in all tRNAs, and that of position 341 (m5U341) in tmRNA (transfer-mRNA). This is tRNA/tmRNA (uracil-C(5))-methyltransferase from Pseudoalteromonas translucida (strain TAC 125).